A 325-amino-acid chain; its full sequence is uncharacterized protein (325 aa).

Coiled coils occupy residues 38 to 69 (VHVA…QNQS) and 201 to 229 (ANTD…LEFK).

This is an uncharacterized protein from Acanthamoeba polyphaga (Amoeba).